The primary structure comprises 194 residues: MTAIKLIVGLGNPGTEYEQTRHNAGALFVERIAEKQGINLVADRKYFGLTGRFSHQGQDIRLLIPTTYMNRSGQAVAALAGFFRIKPEEILVAHDELDLPPGVAKLKTGGGHGGHNGLRDIIAQLGNQNTFHRLRLGIGHPGVASMVSNFVLGRAPRAEQEKLDASIDFALGVLPDIFAGEWNRAMKNLHSQKA.

Residue Tyr17 coordinates tRNA. His22 serves as the catalytic Proton acceptor. TRNA is bound by residues Tyr68, Asn70, and Asn116.

Belongs to the PTH family. As to quaternary structure, monomer.

Its subcellular location is the cytoplasm. It carries out the reaction an N-acyl-L-alpha-aminoacyl-tRNA + H2O = an N-acyl-L-amino acid + a tRNA + H(+). Hydrolyzes ribosome-free peptidyl-tRNAs (with 1 or more amino acids incorporated), which drop off the ribosome during protein synthesis, or as a result of ribosome stalling. Its function is as follows. Catalyzes the release of premature peptidyl moieties from peptidyl-tRNA molecules trapped in stalled 50S ribosomal subunits, and thus maintains levels of free tRNAs and 50S ribosomes. The polypeptide is Peptidyl-tRNA hydrolase (Pseudomonas fluorescens (strain ATCC BAA-477 / NRRL B-23932 / Pf-5)).